A 205-amino-acid polypeptide reads, in one-letter code: Dephospho-CoA kinase (205 aa).

Residues 4–203 (KIGITGGIGS…QKIHYLCSAK (200 aa)) form the DPCK domain. 12-17 (GSGKSV) is an ATP binding site.

It belongs to the CoaE family.

It is found in the cytoplasm. The enzyme catalyses 3'-dephospho-CoA + ATP = ADP + CoA + H(+). The protein operates within cofactor biosynthesis; coenzyme A biosynthesis; CoA from (R)-pantothenate: step 5/5. Catalyzes the phosphorylation of the 3'-hydroxyl group of dephosphocoenzyme A to form coenzyme A. The polypeptide is Dephospho-CoA kinase (Bacteroides fragilis (strain ATCC 25285 / DSM 2151 / CCUG 4856 / JCM 11019 / LMG 10263 / NCTC 9343 / Onslow / VPI 2553 / EN-2)).